A 215-amino-acid polypeptide reads, in one-letter code: Pyridoxine/pyridoxamine 5'-phosphate oxidase (215 aa).

Substrate contacts are provided by residues 9–12 (RRDY) and Lys67. FMN is bound by residues 62–67 (RVVLLK), 77–78 (FT), Lys84, and Gln106. 3 residues coordinate substrate: Tyr124, Arg128, and Ser132. FMN contacts are provided by residues 141 to 142 (QS) and Trp186. Residue 192 to 194 (RLH) coordinates substrate. FMN is bound at residue Arg196.

Belongs to the pyridoxamine 5'-phosphate oxidase family. As to quaternary structure, homodimer. Requires FMN as cofactor.

It catalyses the reaction pyridoxamine 5'-phosphate + O2 + H2O = pyridoxal 5'-phosphate + H2O2 + NH4(+). The enzyme catalyses pyridoxine 5'-phosphate + O2 = pyridoxal 5'-phosphate + H2O2. It functions in the pathway cofactor metabolism; pyridoxal 5'-phosphate salvage; pyridoxal 5'-phosphate from pyridoxamine 5'-phosphate: step 1/1. The protein operates within cofactor metabolism; pyridoxal 5'-phosphate salvage; pyridoxal 5'-phosphate from pyridoxine 5'-phosphate: step 1/1. Its function is as follows. Catalyzes the oxidation of either pyridoxine 5'-phosphate (PNP) or pyridoxamine 5'-phosphate (PMP) into pyridoxal 5'-phosphate (PLP). The chain is Pyridoxine/pyridoxamine 5'-phosphate oxidase from Chromohalobacter salexigens (strain ATCC BAA-138 / DSM 3043 / CIP 106854 / NCIMB 13768 / 1H11).